The following is a 348-amino-acid chain: Putative transport protein HP_0567 (348 aa).

A run of 8 helical transmembrane segments spans residues 6-26, 27-47, 56-76, 143-163, 194-214, 224-244, 266-286, and 300-320; these read FFWI…QDFL, MDAL…VFLD, SFLC…FIVY, LKLI…FYYG, IVLL…GVMI, LGIL…LIWI, SILL…IVFI, and MLIF…GIIV.

It belongs to the autoinducer-2 exporter (AI-2E) (TC 2.A.86) family.

The protein resides in the cell membrane. This Helicobacter pylori (strain ATCC 700392 / 26695) (Campylobacter pylori) protein is Putative transport protein HP_0567.